The primary structure comprises 438 residues: Zinc finger protein 641 (438 aa).

The interval 1 to 53 (MQAEDRSQFGSAAEMLSEQTAALGTGWESMNVQLDGAEPQVERGSQEERPWRT) is disordered. The span at 17 to 32 (SEQTAALGTGWESMNV) shows a compositional bias: polar residues. Basic and acidic residues predominate over residues 40-51 (QVERGSQEERPW). The 73-residue stretch at 109–181 (VTIKDVSLCF…DPQDLEERDI (73 aa)) folds into the KRAB domain. The interval 171-265 (PDPQDLEERD…EMDSLLRPHT (95 aa)) is transactivation. Ser191 carries the phosphoserine modification. 3 consecutive C2H2-type zinc fingers follow at residues 264–286 (HTCPQCGKQFVWGSHLARHQQTH), 292–314 (YSCLKCEKTFGRRHHLIRHQKTH), and 320–342 (SRCSECGKNFRCNSHLASHQRVH). Residues 345-367 (GKSCKGQEVGESPGTRKRQRAPP) form a disordered region. 2 C2H2-type zinc fingers span residues 372–394 (HVCTECGKSFGRRHHLVRHWLTH) and 400–422 (FQCPRCEKSFGRKHHLDRHLLTH). The interval 418 to 438 (HLLTHQGQSPRNSWDRGTSVF) is disordered. The segment covering 422-438 (HQGQSPRNSWDRGTSVF) has biased composition (polar residues). Phosphoserine is present on Ser426.

The protein belongs to the krueppel C2H2-type zinc-finger protein family. As to expression, highly expressed in skeletal muscle, moderate expression in heart, liver, and pancreas, lower expression in placenta, no expression seen in brain, lung, and kidney.

It is found in the nucleus. In terms of biological role, transcriptional activator. Activates transcriptional activities of SRE and AP-1. The sequence is that of Zinc finger protein 641 (ZNF641) from Homo sapiens (Human).